Here is a 2471-residue protein sequence, read N- to C-terminus: Neurogenic locus notch homolog protein 2 (2471 aa).

The N-terminal stretch at 1 to 25 (MPALRPALLWALLALWLCCAAPAHA) is a signal peptide. 4 EGF-like domains span residues 26 to 63 (LQCR…EYCQ), 64 to 102 (HRDP…EDCQ), 105 to 143 (TSHP…KECQ), and 144 to 180 (WTDA…QKCE). Topologically, residues 26-1677 (LQCRDGYEPC…SESLTPERTQ (1652 aa)) are extracellular. Cystine bridges form between cysteine 28–cysteine 41, cysteine 35–cysteine 51, cysteine 53–cysteine 62, cysteine 68–cysteine 79, cysteine 73–cysteine 90, cysteine 92–cysteine 101, cysteine 109–cysteine 121, cysteine 115–cysteine 131, cysteine 133–cysteine 142, cysteine 148–cysteine 159, cysteine 153–cysteine 168, cysteine 170–cysteine 179, cysteine 186–cysteine 198, cysteine 192–cysteine 207, cysteine 209–cysteine 218, cysteine 225–cysteine 236, cysteine 230–cysteine 246, cysteine 248–cysteine 257, cysteine 264–cysteine 275, cysteine 269–cysteine 284, cysteine 286–cysteine 295, cysteine 302–cysteine 315, cysteine 309–cysteine 324, cysteine 326–cysteine 335, cysteine 342–cysteine 353, cysteine 347–cysteine 362, cysteine 364–cysteine 373, cysteine 379–cysteine 390, cysteine 384–cysteine 401, cysteine 403–cysteine 412, cysteine 419–cysteine 433, cysteine 427–cysteine 442, cysteine 444–cysteine 453, cysteine 460–cysteine 471, cysteine 465–cysteine 480, cysteine 482–cysteine 491, cysteine 498–cysteine 509, cysteine 503–cysteine 518, cysteine 520–cysteine 529, cysteine 536–cysteine 547, cysteine 541–cysteine 556, cysteine 558–cysteine 567, cysteine 574–cysteine 584, cysteine 579–cysteine 593, cysteine 595–cysteine 604, cysteine 611–cysteine 622, cysteine 616–cysteine 631, cysteine 633–cysteine 642, cysteine 649–cysteine 659, cysteine 654–cysteine 668, cysteine 670–cysteine 679, cysteine 686–cysteine 697, cysteine 691–cysteine 706, cysteine 708–cysteine 717, cysteine 724–cysteine 734, cysteine 729–cysteine 743, cysteine 745–cysteine 754, cysteine 761–cysteine 772, cysteine 766–cysteine 781, cysteine 783–cysteine 792, cysteine 799–cysteine 810, cysteine 804–cysteine 819, cysteine 821–cysteine 830, cysteine 837–cysteine 848, cysteine 842–cysteine 859, cysteine 861–cysteine 870, cysteine 877–cysteine 888, cysteine 882–cysteine 897, cysteine 899–cysteine 908, cysteine 915–cysteine 926, cysteine 920–cysteine 935, cysteine 937–cysteine 946, cysteine 953–cysteine 964, cysteine 958–cysteine 973, cysteine 975–cysteine 984, cysteine 991–cysteine 1002, cysteine 996–cysteine 1011, cysteine 1013–cysteine 1022, cysteine 1029–cysteine 1040, cysteine 1034–cysteine 1049, cysteine 1051–cysteine 1060, cysteine 1067–cysteine 1078, cysteine 1072–cysteine 1087, and cysteine 1089–cysteine 1098. A glycan (N-linked (GlcNAc...) asparagine) is linked at asparagine 46. An N-linked (GlcNAc...) asparagine glycan is attached at asparagine 155. An EGF-like 5; calcium-binding domain is found at 182–219 (DVNECDIPGHCQHGGTCLNLPGSYQCQCPQGFTGQYCD). The region spanning 221–258 (LYVPCAPSPCVNGGTCRQTGDFTFECNCLPGFEGSTCE) is the EGF-like 6 domain. The EGF-like 7; calcium-binding domain maps to 260-296 (NIDDCPNHRCQNGGVCVDGVNTYNCRCPPQWTGQFCT). An EGF-like 8; calcium-binding domain is found at 298–336 (DVDECLLQPNACQNGGTCANRNGGYGCVCVNGWSGDDCS). Residues 338-374 (NIDDCAFASCTPGSTCIDRVASFSCMCPEGKAGLLCH) form the EGF-like 9; calcium-binding domain. The region spanning 375 to 413 (LDDACISNPCHKGALCDTNPLNGQYICTCPQGYKGADCT) is the EGF-like 10 domain. Residues 415-454 (DVDECAMANSNPCEHAGKCVNTDGAFHCECLKGYAGPRCE) enclose the EGF-like 11; calcium-binding domain. One can recognise an EGF-like 12; calcium-binding domain in the interval 456-492 (DINECHSDPCQNDATCLDKIGGFTCLCMPGFKGVHCE). Positions 494–530 (EINECQSNPCVNNGQCVDKVNRFQCLCPPGFTGPVCQ) constitute an EGF-like 13; calcium-binding domain. The region spanning 532-568 (DIDDCSSTPCLNGAKCIDHPNGYECQCATGFTGVLCE) is the EGF-like 14; calcium-binding domain. In terms of domain architecture, EGF-like 15; calcium-binding spans 570–605 (NIDNCDPDPCHHGQCQDGIDSYTCICNPGYMGAICS). In terms of domain architecture, EGF-like 16; calcium-binding spans 607 to 643 (QIDECYSSPCLNDGRCIDLVNGYQCNCQPGTSGVNCE). The O-linked (Glc...) serine; alternate glycan is linked to serine 613. Residue serine 613 is glycosylated (O-linked (Xyl...) serine; alternate). One can recognise an EGF-like 17; calcium-binding domain in the interval 645–680 (NFDDCASNPCIHGICMDGINRYSCVCSPGFTGQRCN). The EGF-like 18; calcium-binding domain occupies 682 to 718 (DIDECASNPCRKGATCINGVNGFRCICPEGPHHPSCY). The region spanning 720-755 (QVNECLSNPCIHGNCTGGLSGYKCLCDAGWVGINCE) is the EGF-like 19 domain. N-linked (GlcNAc...) asparagine glycosylation is present at asparagine 733. One can recognise an EGF-like 20; calcium-binding domain in the interval 757–793 (DKNECLSNPCQNGGTCDNLVNGYRCTCKKGFKGYNCQ). The 37-residue stretch at 795-831 (NIDECASNPCLNQGTCFDDISGYTCHCVLPYTGKNCQ) folds into the EGF-like 21; calcium-binding domain. An EGF-like 22 domain is found at 833–871 (VLAPCSPNPCENAAVCKESPNFESYTCLCAPGWQGQRCT). One can recognise an EGF-like 23; calcium-binding domain in the interval 873–909 (DIDECISKPCMNHGLCHNTQGSYMCECPPGFSGMDCE). The EGF-like 24; calcium-binding domain occupies 911 to 947 (DIDDCLANPCQNGGSCMDGVNTFSCLCLPGFTGDKCQ). The region spanning 949-985 (DMNECLSEPCKNGGTCSDYVNSYTCKCQAGFDGVHCE) is the EGF-like 25; calcium-binding domain. The EGF-like 26; calcium-binding domain occupies 987 to 1023 (NINECTESSCFNGGTCVDGINSFSCLCPVGFTGSFCL). In terms of domain architecture, EGF-like 27; calcium-binding spans 1025 to 1061 (EINECSSHPCLNEGTCVDGLGTYRCSCPLGYTGKNCQ). EGF-like domains follow at residues 1063 to 1099 (LVNL…AYCD) and 1101 to 1147 (PNVS…SYCE). Asparagine 1102 carries N-linked (GlcNAc...) asparagine glycosylation. 24 cysteine pairs are disulfide-bonded: cysteine 1105-cysteine 1126, cysteine 1120-cysteine 1135, cysteine 1137-cysteine 1146, cysteine 1153-cysteine 1164, cysteine 1158-cysteine 1173, cysteine 1175-cysteine 1184, cysteine 1191-cysteine 1202, cysteine 1196-cysteine 1211, cysteine 1213-cysteine 1222, cysteine 1229-cysteine 1241, cysteine 1235-cysteine 1250, cysteine 1252-cysteine 1261, cysteine 1268-cysteine 1281, cysteine 1273-cysteine 1290, cysteine 1292-cysteine 1301, cysteine 1308-cysteine 1319, cysteine 1313-cysteine 1331, cysteine 1333-cysteine 1342, cysteine 1378-cysteine 1389, cysteine 1383-cysteine 1400, cysteine 1402-cysteine 1411, cysteine 1425-cysteine 1448, cysteine 1430-cysteine 1443, and cysteine 1439-cysteine 1455. The EGF-like 30; calcium-binding domain maps to 1149 to 1185 (QLDECASNPCQHGATCSDFIGGYRCECVPGYQGVNCE). Residues 1187 to 1223 (EVDECQNQPCQNGGTCIDLVNHFKCSCPPGTRGLLCE) form the EGF-like 31; calcium-binding domain. The 38-residue stretch at 1225–1262 (NIDDCARGPHCLNGGQCMDRIGGYSCRCLPGFAGERCE) folds into the EGF-like 32; calcium-binding domain. 3 EGF-like domains span residues 1264-1302 (DINE…RHCE), 1304-1343 (FVDV…ARCQ), and 1374-1412 (CESG…SRCE). 3 LNR repeats span residues 1425–1465 (CLSQ…PWAN), 1466–1502 (CSSP…NSKT), and 1503–1544 (CKYD…NLAE). The tract at residues 1425–1677 (CLSQYCADKA…SESLTPERTQ (253 aa)) is negative regulatory region (NRR). Asparagine 1465 carries N-linked (GlcNAc...) asparagine glycosylation. Cystine bridges form between cysteine 1466–cysteine 1489, cysteine 1472–cysteine 1484, cysteine 1480–cysteine 1496, cysteine 1503–cysteine 1527, cysteine 1509–cysteine 1522, cysteine 1518–cysteine 1534, and cysteine 1632–cysteine 1639. The chain crosses the membrane as a helical span at residues 1678-1698 (LLYLLAVAVVIILFIILLGVI). Residues 1699 to 2471 (MAKRKRKHGS…PPHNNMQVYA (773 aa)) lie on the Cytoplasmic side of the membrane. Threonine 1716 is modified (phosphothreonine). A disordered region spans residues 1754-1788 (TSEHWVDDEGPQPKKVKAEDEALLSEEDDPIDRRP). The segment covering 1774–1783 (EALLSEEDDP) has biased composition (acidic residues). Phosphoserine is present on serine 1778. Threonine 1802 carries the post-translational modification Phosphothreonine. Residue serine 1804 is modified to Phosphoserine. Phosphothreonine is present on threonine 1808. ANK repeat units follow at residues 1827-1871 (DGCT…SLQA), 1876-1905 (TGEM…DANA), 1909-1939 (MGRC…DLDA), 1943-1972 (DGTT…DVNA), 1976-2005 (HGKS…NRDM), and 2009-2038 (KEET…NRDI). Serine 1842 and serine 1845 each carry phosphoserine. Phosphoserine occurs at positions 2070, 2078, and 2081. 2 disordered regions span residues 2091–2168 (FLSL…TSSP) and 2380–2471 (VGKY…QVYA). Residue threonine 2097 is modified to Phosphothreonine. Over residues 2098 to 2107 (PMGKKSRRPS) the composition is skewed to basic residues. Composition is skewed to polar residues over residues 2108–2117 (AKSTMPTSLP), 2137–2150 (EKVQ…TLSP), 2159–2168 (TYVSDTTSSP), and 2388–2406 (SQHS…SHSG). Positions 2417-2445 (PSPESPDQWSSSSPHSASDWSDVTTSPTP) are enriched in low complexity.

This sequence belongs to the NOTCH family. Heterodimer of a C-terminal fragment N(TM) and an N-terminal fragment N(EC) which are probably linked by disulfide bonds. Interacts with MAML1, MAML2 and MAML3 which act as transcriptional coactivators for NOTCH2. Interacts with RELA/p65. Interacts with HIF1AN. Interacts (via ANK repeats) with TCIM, the interaction inhibits the nuclear translocation of NOTCH2 N2ICD. Interacts with CUL1, RBX1, SKP1 and FBXW7 that are SCF(FBXW7) E3 ubiquitin-protein ligase complex components. Interacts with MINAR1; this interaction increases MINAR1 stability and function. Interacts with NOTCH2NL (NOTCH2NLA, NOTCH2NLB and/or NOTCH2NLC); leading to enhance Notch signaling pathway in a non-cell-autonomous manner. Interacts with MDK; this interaction mediates a nuclear accumulation of NOTCH2 and therefore activation of NOTCH2 signaling leading to interaction between HES1 and STAT3. Interacts with MINAR2. In terms of processing, synthesized in the endoplasmic reticulum as an inactive form which is proteolytically cleaved by a furin-like convertase in the trans-Golgi network before it reaches the plasma membrane to yield an active, ligand-accessible form. Cleavage results in a C-terminal fragment N(TM) and a N-terminal fragment N(EC). Following ligand binding, it is cleaved by TNF-alpha converting enzyme (TACE) to yield a membrane-associated intermediate fragment called notch extracellular truncation (NEXT). This fragment is then cleaved by presenilin dependent gamma-secretase to release a notch-derived peptide containing the intracellular domain (NICD) from the membrane. Hydroxylated by HIF1AN. Post-translationally, can be either O-glucosylated or O-xylosylated at Ser-613 by POGLUT1. In terms of processing, phosphorylated by GSK3. GSK3-mediated phosphorylation is necessary for NOTCH2 recognition by FBXW7, ubiquitination and degradation via the ubiquitin proteasome pathway. In terms of tissue distribution, expressed in the brain, heart, kidney, lung, skeletal muscle and liver. Ubiquitously expressed in the embryo.

Its subcellular location is the cell membrane. It localises to the nucleus. It is found in the cytoplasm. Functions as a receptor for membrane-bound ligands Jagged-1 (JAG1), Jagged-2 (JAG2) and Delta-1 (DLL1) to regulate cell-fate determination. Upon ligand activation through the released notch intracellular domain (NICD) it forms a transcriptional activator complex with RBPJ/RBPSUH and activates genes of the enhancer of split locus. Affects the implementation of differentiation, proliferation and apoptotic programs. Involved in bone remodeling and homeostasis. In collaboration with RELA/p65 enhances NFATc1 promoter activity and positively regulates RANKL-induced osteoclast differentiation. Positively regulates self-renewal of liver cancer cells. The polypeptide is Neurogenic locus notch homolog protein 2 (Homo sapiens (Human)).